A 663-amino-acid chain; its full sequence is Cyclic nucleotide-gated channel alpha-2 (663 aa).

Residues 1–61 form a disordered region; sequence MTEKANGVKS…QLAEMDAPQQ (61 aa). The Cytoplasmic portion of the chain corresponds to 1-144; sequence MTEKANGVKS…PAGDWYYRWL (144 aa). Low complexity predominate over residues 12-23; it reads PANNHNHHAPPA. The chain crosses the membrane as a helical span at residues 145–166; that stretch reads FLIALPVLYNWCLLVARACFSD. At 167 to 176 the chain is on the extracellular side; that stretch reads LQKGYYIVWL. Residues 177 to 197 traverse the membrane as a helical segment; sequence VLDYVSDVVYIADLFIRLRTG. At 198–222 the chain is on the cytoplasmic side; sequence FLEQGLLVKDTKKLRDNYIHTMQFK. Residues 223-241 form a helical membrane-spanning segment; it reads LDVASIIPTDLIYFAVGIH. At 242–246 the chain is on the extracellular side; sequence NPEVR. Residues 247-265 form a helical membrane-spanning segment; it reads FNRLLHFARMFEFFDRTET. Topologically, residues 266 to 272 are cytoplasmic; the sequence is RTSYPNI. Residues 270–378 are ion conduction pathway; that stretch reads PNIFRISNLI…GNVGSMISNM (109 aa). The chain crosses the membrane as a helical span at residues 273-296; it reads FRISNLILYILIIIHWNACIYYAI. The Extracellular portion of the chain corresponds to 297–319; the sequence is SKSIGFGVDTWVYPNITDPEYGY. Helical transmembrane passes span 320–354 and 355–379; these read LSREYIYCLYWSTLTLTTIGETPPPVKDEEYLFVI and FDFLIGVLIFATIVGNVGSMISNMN. The segment at 337–340 is selectivity filter; sequence TIGE. Positions 380 to 456 are C-linker; that stretch reads ATRAEFQAKI…STLKKVRIFQ (77 aa). Residues 380–663 are Cytoplasmic-facing; the sequence is ATRAEFQAKI…NSPEPPAEKP (284 aa). The interval 460 to 580 is cyclic nucleotide-binding domain; that stretch reads AGLLVELVLK…EERGREILMK (121 aa). 3',5'-cyclic GMP-binding residues include glycine 520, serine 523, arginine 536, and threonine 537. Residues arginine 536 and threonine 537 each coordinate 3',5'-cyclic AMP. A coiled-coil region spans residues 597 to 651; the sequence is VQEKLEQLETNMDTLYTRFARLLAEYTGAQQKLKQRITVLETKMKQNNEDDSLSD. A disordered region spans residues 640 to 663; the sequence is MKQNNEDDSLSDGMNSPEPPAEKP.

The protein belongs to the cyclic nucleotide-gated cation channel (TC 1.A.1.5) family. CNGA2 subfamily. In terms of assembly, the olfactory cyclic nucleotide-gated channel is an heterotetramer composed of CNGA2, CNGA4 and CNGB1b subunits with 2:1:1 stoichiometry. As to expression, olfactory neurons.

Its subcellular location is the cell projection. The protein localises to the cilium membrane. The enzyme catalyses Ca(2+)(in) = Ca(2+)(out). It catalyses the reaction Na(+)(in) = Na(+)(out). The catalysed reaction is K(+)(in) = K(+)(out). It carries out the reaction NH4(+)(in) = NH4(+)(out). The enzyme catalyses Rb(+)(in) = Rb(+)(out). It catalyses the reaction Li(+)(in) = Li(+)(out). The catalysed reaction is Cs(+)(in) = Cs(+)(out). Functionally, pore-forming subunit of the olfactory cyclic nucleotide-gated channel. Operates in the cilia of olfactory sensory neurons where chemical stimulation of the odorant is converted to an electrical signal. Mediates odorant-induced cAMP-dependent Ca(2+) influx triggering neuron depolarization. The rise of intracellular Ca(2+) levels potentiates the olfactory response by activating Ca(2+)-dependent Cl(-) channels, but it also serves as a negative feedback signal to desensitize the channel for rapid adaptation to odorants. Conducts cAMP- and cGMP-gated ion currents, with permeability for monovalent and divalent cations. This Bos taurus (Bovine) protein is Cyclic nucleotide-gated channel alpha-2.